The sequence spans 1479 residues: Chromosome partition protein MukB (1479 aa).

34-41 (GGNGAGKS) contributes to the ATP binding site. Coiled coils occupy residues 337–418 (LNLV…QYQQ), 511–604 (QAER…APVW), 780–810 (RAAR…DVQK), 847–1116 (ELDR…AKAG), and 1206–1265 (DDPV…LQAV). The segment at 666–783 (PGGSEDPRLN…EVPLFGRAAR (118 aa)) is flexible hinge.

The protein belongs to the SMC family. MukB subfamily. As to quaternary structure, homodimerization via its hinge domain. Binds to DNA via its C-terminal region. Interacts, and probably forms a ternary complex, with MukE and MukF via its C-terminal region. The complex formation is stimulated by calcium or magnesium. Interacts with tubulin-related protein FtsZ.

The protein localises to the cytoplasm. The protein resides in the nucleoid. Plays a central role in chromosome condensation, segregation and cell cycle progression. Functions as a homodimer, which is essential for chromosome partition. Involved in negative DNA supercoiling in vivo, and by this means organize and compact chromosomes. May achieve or facilitate chromosome segregation by condensation DNA from both sides of a centrally located replisome during cell division. The polypeptide is Chromosome partition protein MukB (Pectobacterium atrosepticum (strain SCRI 1043 / ATCC BAA-672) (Erwinia carotovora subsp. atroseptica)).